A 285-amino-acid polypeptide reads, in one-letter code: Glutamate racemase (285 aa).

Substrate is bound by residues 28–29 (DS) and 60–61 (YG). C92 (proton donor/acceptor) is an active-site residue. Residue 93–94 (NT) coordinates substrate. The Proton donor/acceptor role is filled by C204. Substrate is bound at residue 205–206 (TH).

This sequence belongs to the aspartate/glutamate racemases family.

It catalyses the reaction L-glutamate = D-glutamate. The protein operates within cell wall biogenesis; peptidoglycan biosynthesis. Its function is as follows. Provides the (R)-glutamate required for cell wall biosynthesis. The sequence is that of Glutamate racemase from Escherichia coli O7:K1 (strain IAI39 / ExPEC).